We begin with the raw amino-acid sequence, 242 residues long: Cytochrome c oxidase subunit 2 (242 aa).

At 1 to 30 (MSFYGSRYFGDIVHGELGKDLFRYHGFVMM) the chain is on the mitochondrial intermembrane side. The helical transmembrane segment at 31-47 (VAVAVLVFVMYMGCVIL) threads the bilayer. Residues 48–66 (FTKFSYRHFLNRQRLEFWW) lie on the Mitochondrial matrix side of the membrane. Residues 67 to 83 (TIVPMLMLVGLWXPSMI) form a helical membrane-spanning segment. Residues 84 to 242 (NLYYMEEVKR…YFVMWLEALN (159 aa)) lie on the Mitochondrial intermembrane side of the membrane. Cu cation contacts are provided by histidine 176, cysteine 211, glutamate 213, cysteine 215, histidine 219, and methionine 222. Residue glutamate 213 coordinates Mg(2+).

Belongs to the cytochrome c oxidase subunit 2 family. In terms of assembly, component of the cytochrome c oxidase (complex IV, CIV), a multisubunit enzyme composed of a catalytic core of 3 subunits and several supernumerary subunits. The complex exists as a monomer or a dimer and forms supercomplexes (SCs) in the inner mitochondrial membrane with ubiquinol-cytochrome c oxidoreductase (cytochrome b-c1 complex, complex III, CIII). Requires Cu cation as cofactor.

It is found in the mitochondrion inner membrane. The catalysed reaction is 4 Fe(II)-[cytochrome c] + O2 + 8 H(+)(in) = 4 Fe(III)-[cytochrome c] + 2 H2O + 4 H(+)(out). Component of the cytochrome c oxidase, the last enzyme in the mitochondrial electron transport chain which drives oxidative phosphorylation. The respiratory chain contains 3 multisubunit complexes succinate dehydrogenase (complex II, CII), ubiquinol-cytochrome c oxidoreductase (cytochrome b-c1 complex, complex III, CIII) and cytochrome c oxidase (complex IV, CIV), that cooperate to transfer electrons derived from NADH and succinate to molecular oxygen, creating an electrochemical gradient over the inner membrane that drives transmembrane transport and the ATP synthase. Cytochrome c oxidase is the component of the respiratory chain that catalyzes the reduction of oxygen to water. Electrons originating from reduced cytochrome c in the intermembrane space (IMS) are transferred via the dinuclear copper A center (CU(A)) of subunit 2 and heme A of subunit 1 to the active site in subunit 1, a binuclear center (BNC) formed by heme A3 and copper B (CU(B)). The BNC reduces molecular oxygen to 2 water molecules using 4 electrons from cytochrome c in the IMS and 4 protons from the mitochondrial matrix. The polypeptide is Cytochrome c oxidase subunit 2 (COII) (Mytilus edulis (Blue mussel)).